Reading from the N-terminus, the 123-residue chain is Large ribosomal subunit protein bL12 (123 aa).

Belongs to the bacterial ribosomal protein bL12 family. In terms of assembly, homodimer. Part of the ribosomal stalk of the 50S ribosomal subunit. Forms a multimeric L10(L12)X complex, where L10 forms an elongated spine to which 2 to 4 L12 dimers bind in a sequential fashion. Binds GTP-bound translation factors.

Functionally, forms part of the ribosomal stalk which helps the ribosome interact with GTP-bound translation factors. Is thus essential for accurate translation. The chain is Large ribosomal subunit protein bL12 from Rhodopseudomonas palustris (strain BisB5).